The primary structure comprises 572 residues: Probable serine/threonine-protein kinase At1g54610 (572 aa).

The segment at 1–89 (MGCVFGREAA…SNPSKHWRGE (89 aa)) is disordered. The span at 9–40 (AATTTTAEAKQAKSSKASSGVVVVGESSVTKS) shows a compositional bias: low complexity. Over residues 47–67 (DVEKKKNEEANGDKERKSSKG) the composition is skewed to basic and acidic residues. Positions 74–83 (KPNPRLSNPS) are enriched in polar residues. Residues 118-402 (FEKIDKIGQG…ASAALKSEFF (285 aa)) form the Protein kinase domain. Residues 124–132 (IGQGTYSNV) and Lys-147 contribute to the ATP site. Asp-242 (proton acceptor) is an active-site residue. Disordered regions lie at residues 409–474 (CEPA…NVDR) and 526–572 (SSFN…AVVA). Positions 419 to 434 (PSKEIDAKRRDEETRR) are enriched in basic and acidic residues. Residues 554-572 (SRKKKDNTKSSKGKRAVVA) are compositionally biased toward basic residues.

Belongs to the protein kinase superfamily. Ser/Thr protein kinase family.

It catalyses the reaction L-seryl-[protein] + ATP = O-phospho-L-seryl-[protein] + ADP + H(+). It carries out the reaction L-threonyl-[protein] + ATP = O-phospho-L-threonyl-[protein] + ADP + H(+). The chain is Probable serine/threonine-protein kinase At1g54610 from Arabidopsis thaliana (Mouse-ear cress).